The sequence spans 285 residues: Polyamine aminopropyltransferase (285 aa).

Positions Asp5–Lys241 constitute a PABS domain. Gln35 lines the S-methyl-5'-thioadenosine pocket. Spermidine contacts are provided by His66 and Asp90. S-methyl-5'-thioadenosine contacts are provided by residues Asp110 and Asp141 to Gly142. The Proton acceptor role is filled by Asp160. Asp160–Asp163 provides a ligand contact to spermidine. An S-methyl-5'-thioadenosine-binding site is contributed by Pro167.

It belongs to the spermidine/spermine synthase family. In terms of assembly, homodimer or homotetramer.

Its subcellular location is the cytoplasm. It catalyses the reaction S-adenosyl 3-(methylsulfanyl)propylamine + putrescine = S-methyl-5'-thioadenosine + spermidine + H(+). The protein operates within amine and polyamine biosynthesis; spermidine biosynthesis; spermidine from putrescine: step 1/1. Functionally, catalyzes the irreversible transfer of a propylamine group from the amino donor S-adenosylmethioninamine (decarboxy-AdoMet) to putrescine (1,4-diaminobutane) to yield spermidine. The polypeptide is Polyamine aminopropyltransferase (Xylella fastidiosa (strain M12)).